A 298-amino-acid polypeptide reads, in one-letter code: MAAVNCHFFQLSRHLKPSRPSFSCSASQPSQNNIKVIINGAAKEIGRAAVVAVTKARGMELAGAVDNHFVGEDIGLLCDMEEPLEIPVVSDLTMVLGSISQGKEVGVVIDFTDPSTVYENVKQATAFGMKSVVYVPRIKPETVSALSALCDKATMGCLVAPTLSIGSILLQQAVIMASFHYNNVELVESRPNAADLPSPEAIQIANNISNLGQIYNREDSSTDVQARGQVIGEDGVRVHSMVLPGLPSSTQVYFSSPGDVYTVKHDIIDVRSLMPGLLLAIRKVVRLKNLVYGLEKFL.

Residues 1–25 constitute a chloroplast transit peptide; sequence MAAVNCHFFQLSRHLKPSRPSFSCS. Residue 160-163 participates in NAD(+) binding; sequence APTL.

This sequence belongs to the DapB family. In terms of tissue distribution, expressed specifically in leaves.

It localises to the plastid. Its subcellular location is the chloroplast stroma. Functionally, dihydrodipicolinate reductase (DHPR)-like protein that may not function as DHPR in lysine biosynthesis. Required for both formation and activity of the chloroplast NAD(P)H dehydrogenase (NDH) complex of the photosynthetic electron transport chain. May function in assembly or stabilization of the NDH complex. The polypeptide is Dihydrodipicolinate reductase-like protein CRR1, chloroplastic (Arabidopsis thaliana (Mouse-ear cress)).